The primary structure comprises 132 residues: Ribosome-binding factor A (132 aa).

The disordered stretch occupies residues 113–132 (EANSTRAKDDDEADAPAKDD).

Belongs to the RbfA family. In terms of assembly, monomer. Binds 30S ribosomal subunits, but not 50S ribosomal subunits or 70S ribosomes.

Its subcellular location is the cytoplasm. One of several proteins that assist in the late maturation steps of the functional core of the 30S ribosomal subunit. Associates with free 30S ribosomal subunits (but not with 30S subunits that are part of 70S ribosomes or polysomes). Required for efficient processing of 16S rRNA. May interact with the 5'-terminal helix region of 16S rRNA. This is Ribosome-binding factor A from Burkholderia ambifaria (strain MC40-6).